A 465-amino-acid polypeptide reads, in one-letter code: Uronate isomerase (465 aa).

This sequence belongs to the metallo-dependent hydrolases superfamily. Uronate isomerase family.

It catalyses the reaction D-glucuronate = D-fructuronate. The catalysed reaction is aldehydo-D-galacturonate = keto-D-tagaturonate. It participates in carbohydrate metabolism; pentose and glucuronate interconversion. The sequence is that of Uronate isomerase from Streptococcus equi subsp. zooepidemicus (strain H70).